A 115-amino-acid polypeptide reads, in one-letter code: Large ribosomal subunit protein uL18 (115 aa).

It belongs to the universal ribosomal protein uL18 family. Part of the 50S ribosomal subunit; part of the 5S rRNA/L5/L18/L25 subcomplex. Contacts the 5S and 23S rRNAs.

Functionally, this is one of the proteins that bind and probably mediate the attachment of the 5S RNA into the large ribosomal subunit, where it forms part of the central protuberance. The chain is Large ribosomal subunit protein uL18 from Baumannia cicadellinicola subsp. Homalodisca coagulata.